Reading from the N-terminus, the 642-residue chain is Cylicin-1 (642 aa).

Disordered stretches follow at residues 167–203 and 284–607; these read NGEPEILGNTEKNPSKSSHKIKLPKTSNSTSETNLEY and NCSQ…CEPF. Positions 191–203 are enriched in polar residues; it reads KTSNSTSETNLEY. 8 consecutive repeat copies span residues 294 to 313, 314 to 344, 345 to 391, 392 to 432, 433 to 464, 465 to 500, 501 to 526, and 527 to 543. Positions 298 to 316 are enriched in basic and acidic residues; sequence GKKERDSDIDSGGSKDAKK. Residues 317–330 show a composition bias toward basic residues; sequence EGKKKGKRESRKKR. The segment covering 353–364 has biased composition (basic and acidic residues); sequence KKNEIKKKKDTD. Residues 388-404 are compositionally biased toward low complexity; that stretch reads KKSTGSTGSESVDSKST. The span at 405–416 shows a compositional bias: basic residues; sequence NKVKKQVKKGVM. Positions 428-440 are enriched in basic and acidic residues; it reads ASSKKSKKDEKKE. The segment covering 454–463 has biased composition (acidic residues); it reads STDADSESEG. The segment covering 465–488 has biased composition (basic and acidic residues); that stretch reads STGKKNEKKDKKITKKGEKKDAKK. Low complexity predominate over residues 513–523; the sequence is SFSDSTSDSYS. The interval 527 to 543 is 8 X approximate tandem repeats; that stretch reads RRKNVRRSDSESEDSSG.

Interacts with proteins of spermatozoa head including ACTL7A, CCIN, FAM209 and SPACA1; the interactions may be necessary for proper acrosome attachment to the nuclear envelope. In terms of tissue distribution, testis.

It localises to the cytoplasm. It is found in the cytoskeleton. The protein localises to the perinuclear theca. Its subcellular location is the calyx. Its function is as follows. Plays a role in the establishment of normal sperm morphology during spermatogenesis and is required for acrosome attachment to the nuclear envelope. The protein is Cylicin-1 of Mus musculus (Mouse).